The primary structure comprises 460 residues: Omega-3 fatty acid desaturase, chloroplastic (460 aa).

The Histidine box-1 signature appears at His177–His181. The short motif at His213–His217 is the Histidine box-2 element. The short motif at His380 to His384 is the Histidine box-3 element.

Belongs to the fatty acid desaturase type 1 family.

The protein resides in the plastid. It localises to the chloroplast membrane. The protein operates within lipid metabolism; polyunsaturated fatty acid biosynthesis. Chloroplast omega-3 fatty acid desaturase introduces the third double bond in the biosynthesis of 16:3 and 18:3 fatty acids, important constituents of plant membranes. It is thought to use ferredoxin as an electron donor and to act on fatty acids esterified to galactolipids, sulfolipids and phosphatidylglycerol. This Ricinus communis (Castor bean) protein is Omega-3 fatty acid desaturase, chloroplastic (FAD7A-1).